The chain runs to 162 residues: Onchocystatin (162 aa).

An N-terminal signal peptide occupies residues 1–32; it reads MLTIKDGTLLIHLLLFSVVALVQLQGAKSARA. Residues 30 to 54 form a disordered region; the sequence is ARAKNPSKMESKTGENQDRPVLLGG. Residues 36 to 47 are compositionally biased toward basic and acidic residues; it reads SKMESKTGENQD. The Secondary area of contact motif lies at 97-101; the sequence is QVVAG. Cysteines 115 and 128 form a disulfide.

This sequence belongs to the cystatin family. Expressed in the cuticle of L3 and L4 larvae, female adult, and in the eggshell of developing microfilariae.

Its function is as follows. Cysteine protease inhibitor which inhibits members of the peptidase C1 family. In the human host, inhibits CTSL/cathepsin L and CTSS/cathepsin S and to a lesser extent CTSB/cathepsin B which may cause defects in antigen processing and thereby impair antigen-driven T cell proliferation. This Onchocerca volvulus protein is Onchocystatin.